The following is an 84-amino-acid chain: CDC42 small effector protein 2-A (84 aa).

S-palmitoyl cysteine attachment occurs at residues cysteine 10 and cysteine 11. The 14-residue stretch at 29–42 (IGEPTNFVHTAHVG) folds into the CRIB domain.

It belongs to the CDC42SE/SPEC family.

Its subcellular location is the cytoplasm. It is found in the cytoskeleton. It localises to the cell membrane. Functionally, probably involved in the organization of the actin cytoskeleton by acting downstream of CDC42, inducing actin filament assembly. The chain is CDC42 small effector protein 2-A (cdc42se2-A) from Xenopus tropicalis (Western clawed frog).